The following is a 174-amino-acid chain: uncharacterized protein (174 aa).

The N-acetyltransferase domain occupies 42–174; sequence SSNKNINLYE…GVKGMFWYPR (133 aa).

The protein belongs to the acetyltransferase family. Ycf52 subfamily.

Its subcellular location is the plastid. It localises to the chloroplast. This is an uncharacterized protein from Pyropia yezoensis (Susabi-nori).